The primary structure comprises 301 residues: Bifunctional protein FolD (301 aa).

Residues 166–168, serine 191, and isoleucine 232 contribute to the NADP(+) site; that span reads GKS.

The protein belongs to the tetrahydrofolate dehydrogenase/cyclohydrolase family. In terms of assembly, homodimer.

It carries out the reaction (6R)-5,10-methylene-5,6,7,8-tetrahydrofolate + NADP(+) = (6R)-5,10-methenyltetrahydrofolate + NADPH. The catalysed reaction is (6R)-5,10-methenyltetrahydrofolate + H2O = (6R)-10-formyltetrahydrofolate + H(+). It participates in one-carbon metabolism; tetrahydrofolate interconversion. In terms of biological role, catalyzes the oxidation of 5,10-methylenetetrahydrofolate to 5,10-methenyltetrahydrofolate and then the hydrolysis of 5,10-methenyltetrahydrofolate to 10-formyltetrahydrofolate. This chain is Bifunctional protein FolD, found in Orientia tsutsugamushi (strain Boryong) (Rickettsia tsutsugamushi).